Here is a 1049-residue protein sequence, read N- to C-terminus: Isoleucine--tRNA ligase (1049 aa).

A 'HIGH' region motif is present at residues P48–T58. A 'KMSKS' region motif is present at residues K596 to S600. Residue K599 participates in ATP binding.

The protein belongs to the class-I aminoacyl-tRNA synthetase family. IleS type 2 subfamily. Monomer. Requires Zn(2+) as cofactor.

It localises to the cytoplasm. It carries out the reaction tRNA(Ile) + L-isoleucine + ATP = L-isoleucyl-tRNA(Ile) + AMP + diphosphate. In terms of biological role, catalyzes the attachment of isoleucine to tRNA(Ile). As IleRS can inadvertently accommodate and process structurally similar amino acids such as valine, to avoid such errors it has two additional distinct tRNA(Ile)-dependent editing activities. One activity is designated as 'pretransfer' editing and involves the hydrolysis of activated Val-AMP. The other activity is designated 'posttransfer' editing and involves deacylation of mischarged Val-tRNA(Ile). This chain is Isoleucine--tRNA ligase, found in Methanothrix thermoacetophila (strain DSM 6194 / JCM 14653 / NBRC 101360 / PT) (Methanosaeta thermophila).